A 368-amino-acid chain; its full sequence is Chaperone protein DnaJ (368 aa).

The 71-residue stretch at 5 to 75 (DFYKILGVEK…TKRKQYDKFG (71 aa)) folds into the J domain. The CR-type zinc finger occupies 139 to 222 (GKEISQKLTK…CRGKTIVETK (84 aa)). Cysteine 152, cysteine 155, cysteine 169, cysteine 172, cysteine 196, cysteine 199, cysteine 210, and cysteine 213 together coordinate Zn(2+). CXXCXGXG motif repeat units follow at residues 152–159 (CDNCKGSG), 169–176 (CYNCQGRG), 196–203 (CSVCLGSG), and 210–217 (CKKCRGKT).

The protein belongs to the DnaJ family. As to quaternary structure, homodimer. It depends on Zn(2+) as a cofactor.

The protein localises to the cytoplasm. In terms of biological role, participates actively in the response to hyperosmotic and heat shock by preventing the aggregation of stress-denatured proteins and by disaggregating proteins, also in an autonomous, DnaK-independent fashion. Unfolded proteins bind initially to DnaJ; upon interaction with the DnaJ-bound protein, DnaK hydrolyzes its bound ATP, resulting in the formation of a stable complex. GrpE releases ADP from DnaK; ATP binding to DnaK triggers the release of the substrate protein, thus completing the reaction cycle. Several rounds of ATP-dependent interactions between DnaJ, DnaK and GrpE are required for fully efficient folding. Also involved, together with DnaK and GrpE, in the DNA replication of plasmids through activation of initiation proteins. The protein is Chaperone protein DnaJ of Mesomycoplasma hyopneumoniae (strain 232) (Mycoplasma hyopneumoniae).